Consider the following 268-residue polypeptide: Shikimate kinase (268 aa).

ATP is bound at residue 70-80; that stretch reads PSGYGLKSSSA.

This sequence belongs to the GHMP kinase family. Archaeal shikimate kinase subfamily.

It is found in the cytoplasm. It carries out the reaction shikimate + ATP = 3-phosphoshikimate + ADP + H(+). It functions in the pathway metabolic intermediate biosynthesis; chorismate biosynthesis; chorismate from D-erythrose 4-phosphate and phosphoenolpyruvate: step 5/7. The chain is Shikimate kinase (aroK) from Thermoplasma acidophilum (strain ATCC 25905 / DSM 1728 / JCM 9062 / NBRC 15155 / AMRC-C165).